A 94-amino-acid polypeptide reads, in one-letter code: Co-chaperonin GroES (94 aa).

The protein belongs to the GroES chaperonin family. Heptamer of 7 subunits arranged in a ring. Interacts with the chaperonin GroEL.

It is found in the cytoplasm. Together with the chaperonin GroEL, plays an essential role in assisting protein folding. The GroEL-GroES system forms a nano-cage that allows encapsulation of the non-native substrate proteins and provides a physical environment optimized to promote and accelerate protein folding. GroES binds to the apical surface of the GroEL ring, thereby capping the opening of the GroEL channel. The protein is Co-chaperonin GroES of Halalkalibacterium halodurans (strain ATCC BAA-125 / DSM 18197 / FERM 7344 / JCM 9153 / C-125) (Bacillus halodurans).